The primary structure comprises 153 residues: Insulin-like growth factor 1 (153 aa).

A b region spans residues 49 to 77; it reads GPETLCGAELVDALQFVCGDRGFYFNKPT. Cystine bridges form between C54-C96, C66-C109, and C95-C100. The segment at 78 to 89 is c; it reads GYGSSSRRAPQT. The interval 90–110 is a; that stretch reads GIVDECCFRSCDLRRLEMYCA. The interval 111 to 118 is d; the sequence is PLKPAKSA. Positions 119–153 are cleaved as a propeptide — e peptide; that stretch reads RSVRAQRHTDMPKAQKEVHLKNTSRGSSGNKNYRM. Residues 120-153 form a disordered region; it reads SVRAQRHTDMPKAQKEVHLKNTSRGSSGNKNYRM. Residues 125–138 show a composition bias toward basic and acidic residues; that stretch reads RHTDMPKAQKEVHL. Positions 139–153 are enriched in polar residues; sequence KNTSRGSSGNKNYRM.

Belongs to the insulin family. Forms a ternary complex with IGFR1 and ITGAV:ITGB3. Forms a ternary complex with IGFR1 and ITGA6:ITGB4. Forms a ternary complex with IGFBP3 and ALS.

It is found in the secreted. Its function is as follows. The insulin-like growth factors, isolated from plasma, are structurally and functionally related to insulin but have a much higher growth-promoting activity. May be a physiological regulator of [1-14C]-2-deoxy-D-glucose (2DG) transport and glycogen synthesis in osteoblasts. Stimulates glucose transport in bone-derived osteoblastic (PyMS) cells and is effective at much lower concentrations than insulin, not only regarding glycogen and DNA synthesis but also with regard to enhancing glucose uptake. May play a role in synapse maturation. Ca(2+)-dependent exocytosis of IGF1 is required for sensory perception of smell in the olfactory bulb. Acts as a ligand for IGF1R. Binds to the alpha subunit of IGF1R, leading to the activation of the intrinsic tyrosine kinase activity which autophosphorylates tyrosine residues in the beta subunit thus initiating a cascade of down-stream signaling events leading to activation of the PI3K-AKT/PKB and the Ras-MAPK pathways. Binds to integrins ITGAV:ITGB3 and ITGA6:ITGB4. Its binding to integrins and subsequent ternary complex formation with integrins and IGFR1 are essential for IGF1 signaling. Induces the phosphorylation and activation of IGFR1, MAPK3/ERK1, MAPK1/ERK2 and AKT1. As part of the MAPK/ERK signaling pathway, acts as a negative regulator of apoptosis in cardiomyocytes via promotion of STUB1/CHIP-mediated ubiquitination and degradation of ICER-type isoforms of CREM. The sequence is that of Insulin-like growth factor 1 from Sus scrofa (Pig).